A 90-amino-acid chain; its full sequence is Putative transcript Y 12 protein (90 aa).

The polypeptide is Putative transcript Y 12 protein (TTTY12) (Homo sapiens (Human)).